Consider the following 96-residue polypeptide: Co-chaperonin GroES (96 aa).

The protein belongs to the GroES chaperonin family. As to quaternary structure, heptamer of 7 subunits arranged in a ring. Interacts with the chaperonin GroEL.

It localises to the cytoplasm. Together with the chaperonin GroEL, plays an essential role in assisting protein folding. The GroEL-GroES system forms a nano-cage that allows encapsulation of the non-native substrate proteins and provides a physical environment optimized to promote and accelerate protein folding. GroES binds to the apical surface of the GroEL ring, thereby capping the opening of the GroEL channel. This Legionella jeonii protein is Co-chaperonin GroES.